The following is a 245-amino-acid chain: Uracil-DNA glycosylase (245 aa).

Asp82 functions as the Proton acceptor in the catalytic mechanism.

Belongs to the uracil-DNA glycosylase (UDG) superfamily. UNG family.

It is found in the cytoplasm. The catalysed reaction is Hydrolyzes single-stranded DNA or mismatched double-stranded DNA and polynucleotides, releasing free uracil.. Functionally, excises uracil residues from the DNA which can arise as a result of misincorporation of dUMP residues by DNA polymerase or due to deamination of cytosine. In Deinococcus geothermalis (strain DSM 11300 / CIP 105573 / AG-3a), this protein is Uracil-DNA glycosylase.